Consider the following 341-residue polypeptide: D-aspartate oxidase (341 aa).

FAD contacts are provided by Asp36, Arg37, Thr43, Ser44, Met50, Gly307, Ile311, and Ser312. Residues 339–341 carry the Microbody targeting signal motif; the sequence is SKL.

Belongs to the DAMOX/DASOX family. As to quaternary structure, tetramer. Interacts with PEX5; the interaction is direct and required for localization of DDO to the peroxisome. It depends on FAD as a cofactor. As to expression, expressed in liver and kidney (at protein level). In the brain, expressed in the frontal, temporal, and occipital lobes of the cortex, hippocampus, striatum, diencephalon, brainstem, cerebellum, spinal cord, plexus choroiderus and ependyma (at protein level). Also expressed in the lung, muscle, heart, spleen, small intestine and testis (at protein level).

It localises to the peroxisome matrix. The protein localises to the cytoplasm. It is found in the cytosol. The catalysed reaction is D-aspartate + O2 + H2O = oxaloacetate + H2O2 + NH4(+). It catalyses the reaction D-glutamate + O2 + H2O = H2O2 + 2-oxoglutarate + NH4(+). Inhibited by aminooxyacetic acid, malonate, meso-tartrate and potassium bromide. Selectively catalyzes the oxidative deamination of acidic amino acids. Suppresses the level of D-aspartate in the brain, an amino acid that can act as an agonist for glutamate receptors. Protects the organism from the toxicity of D-amino acids. May also function in the intestine. In Rattus norvegicus (Rat), this protein is D-aspartate oxidase.